A 229-amino-acid polypeptide reads, in one-letter code: ATP synthase subunit a (229 aa).

The next 7 helical transmembrane spans lie at 24–44 (RLCF…LLFC), 45–65 (LFDL…FMLF), 83–103 (LLFC…CFLC), 117–137 (FMDV…SLLC), 143–163 (FLRL…FFDF), 177–199 (CYFI…LYLL), and 206–228 (LQLF…FLLF).

This sequence belongs to the ATPase A chain family. F-type ATPases have 2 components, CF(1) - the catalytic core - and CF(0) - the membrane proton channel. CF(1) has five subunits: alpha(3), beta(3), gamma(1), delta(1), epsilon(1). CF(0) has three main subunits: a, b and c.

It is found in the mitochondrion inner membrane. In terms of biological role, mitochondrial membrane ATP synthase (F(1)F(0) ATP synthase or Complex V) produces ATP from ADP in the presence of a proton gradient across the membrane which is generated by electron transport complexes of the respiratory chain. F-type ATPases consist of two structural domains, F(1) - containing the extramembraneous catalytic core and F(0) - containing the membrane proton channel, linked together by a central stalk and a peripheral stalk. During catalysis, ATP synthesis in the catalytic domain of F(1) is coupled via a rotary mechanism of the central stalk subunits to proton translocation. Key component of the proton channel; it may play a direct role in the translocation of protons across the membrane. This chain is ATP synthase subunit a (ATP6), found in Trypanosoma brucei brucei.